The following is a 392-amino-acid chain: MSMPTIRAVRALTVRGGGADYHDQDAGHWIDDHIATPMSRYPEYRQSRQSFGINVLGTLVIEVEASDGTVGFAVTTGGEIGAFIVERHLARFIEGQRVTDIEKMWDQMFHATLYYGRKGVVLNAISGVDLALWDLLAKVRREPVHQLLGGKVRDELEFYATGARPDLAKEMGFIGGKLPLHHGPAEGEAGLRRNLDALADMRSRVGADFWLMLDCWMSLDVPYATRLAHEAHALGLKWIEECLPPDDYWGYAKLRRDVPRGMLVTTGEHEATRWGFRMLLEMECCDIIQPDVGWCGGLTELMRISALADARGVLVIPHGSSVYSYHFVTTRHNSPFAEFLMMAPQADRVVPMFDPLLLDEPVPVGGRMKVPDTPGFGVRLNPDVRMQRPYEH.

Positions 22 and 48 each coordinate substrate. The Mg(2+) site is built by Asp-214, Glu-240, and Glu-268. His-318 serves as the catalytic Proton acceptor. A substrate-binding site is contributed by Glu-338.

Belongs to the mandelate racemase/muconate lactonizing enzyme family. RhamD subfamily. In terms of assembly, homooctamer; tetramer of dimers. Mg(2+) serves as cofactor.

It catalyses the reaction L-rhamnonate = 2-dehydro-3-deoxy-L-rhamnonate + H2O. Catalyzes the dehydration of L-rhamnonate to 2-keto-3-deoxy-L-rhamnonate (KDR). The chain is L-rhamnonate dehydratase from Burkholderia cenocepacia (strain HI2424).